A 476-amino-acid chain; its full sequence is UDP-N-acetylmuramate--L-alanine ligase (476 aa).

121 to 127 (GAHGKTT) is an ATP binding site.

This sequence belongs to the MurCDEF family.

The protein localises to the cytoplasm. The catalysed reaction is UDP-N-acetyl-alpha-D-muramate + L-alanine + ATP = UDP-N-acetyl-alpha-D-muramoyl-L-alanine + ADP + phosphate + H(+). Its pathway is cell wall biogenesis; peptidoglycan biosynthesis. Cell wall formation. This is UDP-N-acetylmuramate--L-alanine ligase from Clavibacter michiganensis subsp. michiganensis (strain NCPPB 382).